The chain runs to 333 residues: Acetyl-coenzyme A carboxylase carboxyl transferase subunit alpha (333 aa).

A CoA carboxyltransferase C-terminal domain is found at 48–308 (LLEQKVDALR…KEMLVEELRD (261 aa)).

Belongs to the AccA family. As to quaternary structure, acetyl-CoA carboxylase is a heterohexamer composed of biotin carboxyl carrier protein (AccB), biotin carboxylase (AccC) and two subunits each of ACCase subunit alpha (AccA) and ACCase subunit beta (AccD).

It is found in the cytoplasm. It catalyses the reaction N(6)-carboxybiotinyl-L-lysyl-[protein] + acetyl-CoA = N(6)-biotinyl-L-lysyl-[protein] + malonyl-CoA. It functions in the pathway lipid metabolism; malonyl-CoA biosynthesis; malonyl-CoA from acetyl-CoA: step 1/1. In terms of biological role, component of the acetyl coenzyme A carboxylase (ACC) complex. First, biotin carboxylase catalyzes the carboxylation of biotin on its carrier protein (BCCP) and then the CO(2) group is transferred by the carboxyltransferase to acetyl-CoA to form malonyl-CoA. In Chlorobium limicola (strain DSM 245 / NBRC 103803 / 6330), this protein is Acetyl-coenzyme A carboxylase carboxyl transferase subunit alpha.